The sequence spans 509 residues: Glycerol kinase (509 aa).

ADP is bound at residue threonine 12. Positions 12, 13, and 14 each coordinate ATP. Sn-glycerol 3-phosphate is bound at residue threonine 12. Arginine 16 serves as a coordination point for ADP. Arginine 82, glutamate 83, tyrosine 134, and aspartate 245 together coordinate sn-glycerol 3-phosphate. Glycerol contacts are provided by arginine 82, glutamate 83, tyrosine 134, aspartate 245, and glutamine 246. Threonine 267 and glycine 311 together coordinate ADP. The ATP site is built by threonine 267, glycine 311, glutamine 315, and glycine 412. ADP-binding residues include glycine 412 and asparagine 416.

This sequence belongs to the FGGY kinase family.

The catalysed reaction is glycerol + ATP = sn-glycerol 3-phosphate + ADP + H(+). It participates in polyol metabolism; glycerol degradation via glycerol kinase pathway; sn-glycerol 3-phosphate from glycerol: step 1/1. With respect to regulation, inhibited by fructose 1,6-bisphosphate (FBP). Key enzyme in the regulation of glycerol uptake and metabolism. Catalyzes the phosphorylation of glycerol to yield sn-glycerol 3-phosphate. The chain is Glycerol kinase from Rhizorhabdus wittichii (strain DSM 6014 / CCUG 31198 / JCM 15750 / NBRC 105917 / EY 4224 / RW1) (Sphingomonas wittichii).